We begin with the raw amino-acid sequence, 150 residues long: Large ribosomal subunit protein uL11 (150 aa).

Belongs to the universal ribosomal protein uL11 family. In terms of assembly, part of the ribosomal stalk of the 50S ribosomal subunit. Interacts with L10 and the large rRNA to form the base of the stalk. L10 forms an elongated spine to which L12 dimers bind in a sequential fashion forming a multimeric L10(L12)X complex. Post-translationally, one or more lysine residues are methylated.

Forms part of the ribosomal stalk which helps the ribosome interact with GTP-bound translation factors. The chain is Large ribosomal subunit protein uL11 from Cereibacter sphaeroides (strain KD131 / KCTC 12085) (Rhodobacter sphaeroides).